Reading from the N-terminus, the 298-residue chain is Oxygen-dependent coproporphyrinogen-III oxidase (298 aa).

S92 serves as a coordination point for substrate. The a divalent metal cation site is built by H96 and H106. Residue H106 is the Proton donor of the active site. A substrate-binding site is contributed by 108–110 (NVR). The a divalent metal cation site is built by H145 and H175. Residues 239-274 (YVEFNLVYDRGTLFGLQSGGRSESILMSLPPRVRWE) form an important for dimerization region. 257–259 (GGR) serves as a coordination point for substrate.

The protein belongs to the aerobic coproporphyrinogen-III oxidase family. Homodimer. The cofactor is a divalent metal cation.

It is found in the cytoplasm. It carries out the reaction coproporphyrinogen III + O2 + 2 H(+) = protoporphyrinogen IX + 2 CO2 + 2 H2O. Its pathway is porphyrin-containing compound metabolism; protoporphyrin-IX biosynthesis; protoporphyrinogen-IX from coproporphyrinogen-III (O2 route): step 1/1. In terms of biological role, involved in the heme biosynthesis. Catalyzes the aerobic oxidative decarboxylation of propionate groups of rings A and B of coproporphyrinogen-III to yield the vinyl groups in protoporphyrinogen-IX. The polypeptide is Oxygen-dependent coproporphyrinogen-III oxidase (Stenotrophomonas maltophilia (strain K279a)).